The primary structure comprises 455 residues: Bifunctional protein GlmU (455 aa).

Residues 1-229 (MLNSAMSVVI…ISETEGVNNR (229 aa)) form a pyrophosphorylase region. UDP-N-acetyl-alpha-D-glucosamine contacts are provided by residues 11 to 14 (LAAG), Lys25, Gln76, 81 to 82 (GT), 103 to 105 (YGD), Gly140, Glu154, Asn169, and Asn227. Asp105 is a Mg(2+) binding site. Asn227 lines the Mg(2+) pocket. A linker region spans residues 230-250 (LQLSRLERIYQAEQAEKLLLA). An N-acetyltransferase region spans residues 251 to 455 (GVMLRDPARF…KQGWQRPVKK (205 aa)). UDP-N-acetyl-alpha-D-glucosamine is bound by residues Arg333 and Lys351. The Proton acceptor role is filled by His363. UDP-N-acetyl-alpha-D-glucosamine is bound by residues Tyr366 and Asn377. Residues Ala380, 386-387 (NY), Ser405, Ala423, and Arg440 each bind acetyl-CoA.

In the N-terminal section; belongs to the N-acetylglucosamine-1-phosphate uridyltransferase family. The protein in the C-terminal section; belongs to the transferase hexapeptide repeat family. As to quaternary structure, homotrimer. The cofactor is Mg(2+).

It is found in the cytoplasm. The enzyme catalyses alpha-D-glucosamine 1-phosphate + acetyl-CoA = N-acetyl-alpha-D-glucosamine 1-phosphate + CoA + H(+). It catalyses the reaction N-acetyl-alpha-D-glucosamine 1-phosphate + UTP + H(+) = UDP-N-acetyl-alpha-D-glucosamine + diphosphate. Its pathway is nucleotide-sugar biosynthesis; UDP-N-acetyl-alpha-D-glucosamine biosynthesis; N-acetyl-alpha-D-glucosamine 1-phosphate from alpha-D-glucosamine 6-phosphate (route II): step 2/2. It participates in nucleotide-sugar biosynthesis; UDP-N-acetyl-alpha-D-glucosamine biosynthesis; UDP-N-acetyl-alpha-D-glucosamine from N-acetyl-alpha-D-glucosamine 1-phosphate: step 1/1. It functions in the pathway bacterial outer membrane biogenesis; LPS lipid A biosynthesis. Catalyzes the last two sequential reactions in the de novo biosynthetic pathway for UDP-N-acetylglucosamine (UDP-GlcNAc). The C-terminal domain catalyzes the transfer of acetyl group from acetyl coenzyme A to glucosamine-1-phosphate (GlcN-1-P) to produce N-acetylglucosamine-1-phosphate (GlcNAc-1-P), which is converted into UDP-GlcNAc by the transfer of uridine 5-monophosphate (from uridine 5-triphosphate), a reaction catalyzed by the N-terminal domain. This Salmonella arizonae (strain ATCC BAA-731 / CDC346-86 / RSK2980) protein is Bifunctional protein GlmU.